Consider the following 133-residue polypeptide: Transcription antitermination protein NusB (133 aa).

The protein belongs to the NusB family.

In terms of biological role, involved in transcription antitermination. Required for transcription of ribosomal RNA (rRNA) genes. Binds specifically to the boxA antiterminator sequence of the ribosomal RNA (rrn) operons. The protein is Transcription antitermination protein NusB of Shewanella denitrificans (strain OS217 / ATCC BAA-1090 / DSM 15013).